The sequence spans 991 residues: Regulator of telomere elongation helicase 1 homolog (991 aa).

The 313-residue stretch at 7–319 (NGIPVNFPFE…DDLVLLKEIL (313 aa)) folds into the Helicase ATP-binding domain. Residue 42–49 (SPTGTGKT) coordinates ATP. Residues Cys-148, Cys-166, Cys-175, and Cys-211 each coordinate [4Fe-4S] cluster. Residues 254–257 (DEAH) carry the DEAH box motif. The interval 812–833 (SMKVNPHSRSTKSAGDDAEAGG) is disordered.

This sequence belongs to the helicase family. RAD3/XPD subfamily.

The protein localises to the nucleus. It carries out the reaction ATP + H2O = ADP + phosphate + H(+). Its function is as follows. A probable ATP-dependent DNA helicase implicated in DNA repair and the maintenance of genomic stability. Acts as an anti-recombinase to counteract toxic recombination and limit crossover during meiosis. Regulates meiotic recombination and crossover homeostasis by physically dissociating strand invasion events and thereby promotes noncrossover repair by meiotic synthesis dependent strand annealing (SDSA) as well as disassembly of D loop recombination intermediates. This chain is Regulator of telomere elongation helicase 1 homolog, found in Anopheles gambiae (African malaria mosquito).